We begin with the raw amino-acid sequence, 292 residues long: UDP-N-acetylenolpyruvoylglucosamine reductase (292 aa).

An FAD-binding PCMH-type domain is found at 21 to 186; the sequence is QAGGLVDYLA…ISATFELQPD (166 aa). Residue R165 is part of the active site. S215 functions as the Proton donor in the catalytic mechanism. The active site involves E285.

It belongs to the MurB family. It depends on FAD as a cofactor.

Its subcellular location is the cytoplasm. The catalysed reaction is UDP-N-acetyl-alpha-D-muramate + NADP(+) = UDP-N-acetyl-3-O-(1-carboxyvinyl)-alpha-D-glucosamine + NADPH + H(+). Its pathway is cell wall biogenesis; peptidoglycan biosynthesis. In terms of biological role, cell wall formation. In Leuconostoc mesenteroides subsp. mesenteroides (strain ATCC 8293 / DSM 20343 / BCRC 11652 / CCM 1803 / JCM 6124 / NCDO 523 / NBRC 100496 / NCIMB 8023 / NCTC 12954 / NRRL B-1118 / 37Y), this protein is UDP-N-acetylenolpyruvoylglucosamine reductase.